Consider the following 504-residue polypeptide: Arabinose import ATP-binding protein AraG (504 aa).

ABC transporter domains lie at 8–243 (LSFR…MVGR) and 256–499 (YGEE…MPKV). Residue 40–47 (GENGAGKS) participates in ATP binding.

Belongs to the ABC transporter superfamily. Arabinose importer (TC 3.A.1.2.2) family. In terms of assembly, the complex is composed of two ATP-binding proteins (AraG), two transmembrane proteins (AraH) and a solute-binding protein (AraF).

The protein resides in the cell inner membrane. The catalysed reaction is L-arabinose(out) + ATP + H2O = L-arabinose(in) + ADP + phosphate + H(+). Its function is as follows. Part of the ABC transporter complex AraFGH involved in arabinose import. Responsible for energy coupling to the transport system. The polypeptide is Arabinose import ATP-binding protein AraG (Shigella flexneri).